We begin with the raw amino-acid sequence, 416 residues long: Adenylosuccinate synthetase (416 aa).

GTP-binding positions include 12-18 (GDEGKGK) and 40-42 (GHT). The Proton acceptor role is filled by Asp-13. Positions 13 and 40 each coordinate Mg(2+). IMP is bound by residues 13–16 (DEGK), 38–41 (NAGH), Thr-125, Arg-139, Gln-220, Thr-235, and Arg-299. His-41 (proton donor) is an active-site residue. 295–301 (TTTGRPR) serves as a coordination point for substrate. GTP is bound by residues Arg-301, 327 to 329 (KLD), and 405 to 407 (STS).

The protein belongs to the adenylosuccinate synthetase family. In terms of assembly, homodimer. Mg(2+) serves as cofactor.

It is found in the cytoplasm. The catalysed reaction is IMP + L-aspartate + GTP = N(6)-(1,2-dicarboxyethyl)-AMP + GDP + phosphate + 2 H(+). Its pathway is purine metabolism; AMP biosynthesis via de novo pathway; AMP from IMP: step 1/2. Plays an important role in the de novo pathway of purine nucleotide biosynthesis. Catalyzes the first committed step in the biosynthesis of AMP from IMP. This is Adenylosuccinate synthetase from Nitratiruptor sp. (strain SB155-2).